A 615-amino-acid chain; its full sequence is (+)-alpha-pinene synthase TPS2, chloroplastic (615 aa).

A chloroplast-targeting transit peptide spans 1-55 (MHCMAVRHFAPSSSLSIFSSTNINNHFFGREIFTPKTSNITTKKSRSRPNCNPIQ). (2E)-geranyl diphosphate is bound by residues arginine 330, aspartate 367, aspartate 371, arginine 509, and aspartate 512. Residues aspartate 367 and aspartate 371 each contribute to the Mg(2+) site. The DDXXD motif signature appears at 367–371 (DDIYD). Positions 512, 516, and 520 each coordinate Mg(2+).

The protein belongs to the terpene synthase family. Tpsb subfamily. Requires Mg(2+) as cofactor. Mn(2+) is required as a cofactor. It depends on K(+) as a cofactor. In terms of tissue distribution, trichome.

The protein localises to the plastid. It is found in the chloroplast. The enzyme catalyses (2E)-geranyl diphosphate = (1R,5R)-alpha-pinene + diphosphate. It carries out the reaction (2E)-geranyl diphosphate = (1R,5R)-beta-pinene + diphosphate. It catalyses the reaction (2E)-geranyl diphosphate = (4S)-limonene + diphosphate. The catalysed reaction is (2E)-geranyl diphosphate = beta-myrcene + diphosphate. Its pathway is secondary metabolite biosynthesis; terpenoid biosynthesis. It participates in terpene metabolism; (-)-alpha-pinene biosynthesis; (-)-alpha-pinene from geranyl diphosphate: step 1/1. Functionally, involved in monoterpene (C10) olefins biosynthesis, constituants of cannabinoids and terpenoids-rich resins. Catalyzes mainly the conversion of (2E)-geranyl diphosphate to (+)-alpha-pinene, and also produces minor products such as (-)-limonene, (+)-beta-pinene and beta-myrcene. The chain is (+)-alpha-pinene synthase TPS2, chloroplastic from Cannabis sativa (Hemp).